The sequence spans 491 residues: Chromosomal replication initiator protein DnaA (491 aa).

Residues 1–69 (MTTWDKCLKK…TIQECHGNDL (69 aa)) form a domain I, interacts with DnaA modulators region. The domain II stretch occupies residues 69-154 (LIIEYSNKKF…KEDEEYSFGL (86 aa)). The tract at residues 155–371 (PLKEKYVFDS…GALNRVLTTS (217 aa)) is domain III, AAA+ region. Positions 199, 201, 202, and 203 each coordinate ATP. The segment at 372–491 (KFNHKDPTIE…YELLLDKISR (120 aa)) is domain IV, binds dsDNA.

Belongs to the DnaA family. As to quaternary structure, oligomerizes as a right-handed, spiral filament on DNA at oriC.

The protein localises to the cytoplasm. Plays an essential role in the initiation and regulation of chromosomal replication. ATP-DnaA binds to the origin of replication (oriC) to initiate formation of the DNA replication initiation complex once per cell cycle. Binds the DnaA box (a 9 base pair repeat at the origin) and separates the double-stranded (ds)DNA. Forms a right-handed helical filament on oriC DNA; dsDNA binds to the exterior of the filament while single-stranded (ss)DNA is stabiized in the filament's interior. The ATP-DnaA-oriC complex binds and stabilizes one strand of the AT-rich DNA unwinding element (DUE), permitting loading of DNA polymerase. After initiation quickly degrades to an ADP-DnaA complex that is not apt for DNA replication. Binds acidic phospholipids. The chain is Chromosomal replication initiator protein DnaA from Francisella tularensis subsp. holarctica (strain FTNF002-00 / FTA).